The chain runs to 209 residues: Ribonuclease HII (209 aa).

An RNase H type-2 domain is found at 18–209; sequence GLVAGVDEVG…FKPVKALLER (192 aa). 3 residues coordinate a divalent metal cation: Asp-24, Glu-25, and Asp-116.

The protein belongs to the RNase HII family. It depends on Mn(2+) as a cofactor. Mg(2+) is required as a cofactor.

The protein resides in the cytoplasm. The catalysed reaction is Endonucleolytic cleavage to 5'-phosphomonoester.. Functionally, endonuclease that specifically degrades the RNA of RNA-DNA hybrids. The polypeptide is Ribonuclease HII (Shewanella sp. (strain ANA-3)).